Reading from the N-terminus, the 1220-residue chain is DNA-directed RNA polymerase subunit beta (1220 aa).

It belongs to the RNA polymerase beta chain family. As to quaternary structure, the RNAP catalytic core consists of 2 alpha, 1 beta, 1 beta' and 1 omega subunit. When a sigma factor is associated with the core the holoenzyme is formed, which can initiate transcription.

It carries out the reaction RNA(n) + a ribonucleoside 5'-triphosphate = RNA(n+1) + diphosphate. Its function is as follows. DNA-dependent RNA polymerase catalyzes the transcription of DNA into RNA using the four ribonucleoside triphosphates as substrates. The chain is DNA-directed RNA polymerase subunit beta from Mesomycoplasma hyopneumoniae (strain 232) (Mycoplasma hyopneumoniae).